Reading from the N-terminus, the 395-residue chain is Carbohydrate sulfotransferase 5 (395 aa).

At 1-7 (MRLPRFS) the chain is on the cytoplasmic side. Residues 8–26 (STVMLSLLMVQTGILVFLV) form a helical; Signal-anchor for type II membrane protein membrane-spanning segment. Over 27-395 (SRQVPSSPAG…ASSTEKQPES (369 aa)) the chain is Lumenal. A 3'-phosphoadenylyl sulfate-binding site is contributed by 49–55 (WRSGSSF). N116 and N142 each carry an N-linked (GlcNAc...) asparagine glycan. 202–210 (RDPRAVLRS) contributes to the 3'-phosphoadenylyl sulfate binding site. 2 N-linked (GlcNAc...) asparagine glycosylation sites follow: N229 and N305.

It belongs to the sulfotransferase 1 family. Gal/GlcNAc/GalNAc subfamily. Expressed in cornea.

The protein resides in the golgi apparatus membrane. Its function is as follows. Sulfotransferase that utilizes 3'-phospho-5'-adenylyl sulfate (PAPS) as sulfonate donor to catalyze the transfer of sulfate to position 6 of non-reducing N-acetylglucosamine (GlcNAc) residues of keratan. Mediates sulfation of keratan in cornea. Keratan sulfate plays a central role in maintaining corneal transparency. Acts on the non-reducing terminal GlcNAc of short and long carbohydrate substrates that have poly-N-acetyllactosamine structures. May also have activity toward O-linked sugars of mucin-type acceptors. The protein is Carbohydrate sulfotransferase 5 (Chst5) of Mus musculus (Mouse).